We begin with the raw amino-acid sequence, 178 residues long: DNA-directed RNA polymerase V subunit 7 (178 aa).

This sequence belongs to the eukaryotic RPB7/RPC8 RNA polymerase subunit family. In terms of assembly, component of the RNA polymerase V complex.

The protein resides in the nucleus. Its function is as follows. DNA-dependent RNA polymerase catalyzes the transcription of DNA into RNA using the four ribonucleoside triphosphates as substrates. Component of RNA polymerase V involved in RNA-directed DNA methylation-dependent (RdDM) silencing of endogenous repeated sequences, including transposable elements. This Arabidopsis thaliana (Mouse-ear cress) protein is DNA-directed RNA polymerase V subunit 7 (NRPE7).